Consider the following 417-residue polypeptide: 2-oxoglutarate and iron-dependent oxygenase JMJD4 (417 aa).

In terms of domain architecture, JmjC spans cysteine 142–leucine 301. Histidine 189, aspartate 191, and histidine 269 together coordinate Fe cation.

The protein belongs to the JMJD6 family. Interacts with ETF1. Interacts with the ETF1-GSPT1 complex. Requires Fe(2+) as cofactor.

The protein resides in the cytoplasm. The catalysed reaction is L-lysyl-[protein] + 2-oxoglutarate + O2 = 4-hydroxy-L-lysyl-[protein] + succinate + CO2. Its function is as follows. Catalyzes the 2-oxoglutarate and iron-dependent C4-lysyl hydroxylation of ETF1 at 'Lys-63' thereby promoting the translational termination efficiency of ETF1. The chain is 2-oxoglutarate and iron-dependent oxygenase JMJD4 (JMJD4) from Homo sapiens (Human).